Reading from the N-terminus, the 179-residue chain is Large ribosomal subunit protein uL5 (179 aa).

This sequence belongs to the universal ribosomal protein uL5 family. In terms of assembly, part of the 50S ribosomal subunit; part of the 5S rRNA/L5/L18/L25 subcomplex. Contacts the 5S rRNA and the P site tRNA. Forms a bridge to the 30S subunit in the 70S ribosome.

In terms of biological role, this is one of the proteins that bind and probably mediate the attachment of the 5S RNA into the large ribosomal subunit, where it forms part of the central protuberance. In the 70S ribosome it contacts protein S13 of the 30S subunit (bridge B1b), connecting the 2 subunits; this bridge is implicated in subunit movement. Contacts the P site tRNA; the 5S rRNA and some of its associated proteins might help stabilize positioning of ribosome-bound tRNAs. This is Large ribosomal subunit protein uL5 from Dechloromonas aromatica (strain RCB).